A 452-amino-acid polypeptide reads, in one-letter code: Cell division protein FtsZ (452 aa).

GTP is bound by residues 24 to 28 (GAGSN), 111 to 113 (GTG), E142, R146, and D190.

This sequence belongs to the FtsZ family. In terms of assembly, homodimer. Polymerizes to form a dynamic ring structure in a strictly GTP-dependent manner. Interacts directly with several other division proteins.

It localises to the cytoplasm. Essential cell division protein that forms a contractile ring structure (Z ring) at the future cell division site. The regulation of the ring assembly controls the timing and the location of cell division. One of the functions of the FtsZ ring is to recruit other cell division proteins to the septum to produce a new cell wall between the dividing cells. Binds GTP and shows GTPase activity. This chain is Cell division protein FtsZ, found in Rickettsia prowazekii (strain Madrid E).